We begin with the raw amino-acid sequence, 502 residues long: Bone morphogenetic protein receptor type-1B (502 aa).

Residues 1–10 show a composition bias toward polar residues; that stretch reads MPLLSSSKLS. The N-terminal stretch at 1 to 13 is a signal peptide; that stretch reads MPLLSSSKLSMES. The tract at residues 1–27 is disordered; that stretch reads MPLLSSSKLSMESRKEDSEGTAPAPPQ. Topologically, residues 14–126 are extracellular; the sequence is RKEDSEGTAP…DFAEGNIHHK (113 aa). 5 disulfide bridges follow: cysteine 32/cysteine 53, cysteine 34/cysteine 38, cysteine 47/cysteine 71, cysteine 81/cysteine 95, and cysteine 96/cysteine 102. N-linked (GlcNAc...) asparagine glycosylation occurs at asparagine 44. The helical transmembrane segment at 127–148 threads the bilayer; it reads ALLISVTVCSILLVLIIIFCYF. The Cytoplasmic portion of the chain corresponds to 149–502; it reads RYKRQEARPR…KMSESQDIKL (354 aa). One can recognise a GS domain in the interval 174 to 203; the sequence is ESLKDLIEQSQSSGSGSGLPLLVQRTIAKQ. Residues 204–494 enclose the Protein kinase domain; the sequence is IQMVKQIGKG…LRVKKTLAKM (291 aa). Residues 210–218 and lysine 231 each bind ATP; that span reads IGKGRYGEV. Aspartate 332 acts as the Proton acceptor in catalysis.

Belongs to the protein kinase superfamily. TKL Ser/Thr protein kinase family. TGFB receptor subfamily. Requires Mg(2+) as cofactor. The cofactor is Mn(2+). Autophosphorylated.

The protein localises to the cell membrane. The catalysed reaction is L-threonyl-[receptor-protein] + ATP = O-phospho-L-threonyl-[receptor-protein] + ADP + H(+). It catalyses the reaction L-seryl-[receptor-protein] + ATP = O-phospho-L-seryl-[receptor-protein] + ADP + H(+). In terms of biological role, on ligand binding, forms a receptor complex consisting of two type II and two type I transmembrane serine/threonine kinases. Type II receptors phosphorylate and activate type I receptors which autophosphorylate, then bind and activate SMAD transcription. Positively regulates chondrocyte differentiation. The protein is Bone morphogenetic protein receptor type-1B (BMPR1B) of Gallus gallus (Chicken).